The chain runs to 469 residues: GDNF family receptor alpha-1 (469 aa).

Residues 1–27 (MFLALLYLALPLADVLLSAEVSGLPGG) form the signal peptide. Repeat copies occupy residues 28–116 (DRLD…LQGN), 149–237 (KGNN…YEDR), and 238–341 (EKPN…KNAI). Residues C39 and C45 are joined by a disulfide bond. N62 and N163 each carry an N-linked (GlcNAc...) asparagine glycan. Disulfide bonds link C153–C213, C160–C166, C177–C191, C186–C232, C215–C220, C242–C312, C249–C255, C266–C284, C276–C336, and C314–C324. N-linked (GlcNAc...) asparagine glycans are attached at residues N346 and N405. The GPI-anchor amidated serine moiety is linked to residue S430. Residues 431-469 (HISSENSFALPTSFYPSTPLILMTIALSLFLFLSSSVVL) constitute a propeptide, removed in mature form.

This sequence belongs to the GDNFR family. Interacts with GDNF ligand and RET: forms a 2:2:2 ternary complex composed of GDNF ligand, GFRA1 and RET receptor.

It localises to the cell membrane. The protein resides in the golgi apparatus. Its subcellular location is the trans-Golgi network. The protein localises to the endosome. It is found in the multivesicular body. Its function is as follows. Coreceptor for GDNF, a neurotrophic factor that enhances survival and morphological differentiation of dopaminergic neurons and increases their high-affinity dopamine uptake. GDNF-binding leads to autophosphorylation and activation of the RET receptor. The polypeptide is GDNF family receptor alpha-1 (GFRA1) (Gallus gallus (Chicken)).